The sequence spans 166 residues: Lipoprotein signal peptidase (166 aa).

3 helical membrane passes run 12–32 (WLWV…LILQ), 70–90 (WFFS…MYRS), and 102–122 (ALII…GFVV). Residues aspartate 123 and aspartate 141 contribute to the active site. Residues 137-157 (FNLADSAICIGAALIVLEGFL) traverse the membrane as a helical segment.

It belongs to the peptidase A8 family.

The protein resides in the cell inner membrane. It catalyses the reaction Release of signal peptides from bacterial membrane prolipoproteins. Hydrolyzes -Xaa-Yaa-Zaa-|-(S,diacylglyceryl)Cys-, in which Xaa is hydrophobic (preferably Leu), and Yaa (Ala or Ser) and Zaa (Gly or Ala) have small, neutral side chains.. It participates in protein modification; lipoprotein biosynthesis (signal peptide cleavage). Its function is as follows. This protein specifically catalyzes the removal of signal peptides from prolipoproteins. This is Lipoprotein signal peptidase from Klebsiella pneumoniae subsp. pneumoniae (strain ATCC 700721 / MGH 78578).